A 141-amino-acid chain; its full sequence is Small ribosomal subunit protein eS17z (141 aa).

It belongs to the eukaryotic ribosomal protein eS17 family.

This is Small ribosomal subunit protein eS17z (RPS17A) from Arabidopsis thaliana (Mouse-ear cress).